The sequence spans 398 residues: Elongation factor Tu (398 aa).

The tr-type G domain maps to 10–207 (KPHVNIGTIG…TVDEYIPEPE (198 aa)). Residues 19-26 (GHVDHGKT) form a G1 region. 19-26 (GHVDHGKT) provides a ligand contact to GTP. Threonine 26 lines the Mg(2+) pocket. The interval 63–67 (GITIN) is G2. The tract at residues 84-87 (DAPG) is G3. Residues 84 to 88 (DAPGH) and 139 to 142 (NKVD) each bind GTP. A G4 region spans residues 139–142 (NKVD). The G5 stretch occupies residues 177-179 (SAL).

The protein belongs to the TRAFAC class translation factor GTPase superfamily. Classic translation factor GTPase family. EF-Tu/EF-1A subfamily. As to quaternary structure, monomer.

The protein localises to the cytoplasm. It carries out the reaction GTP + H2O = GDP + phosphate + H(+). GTP hydrolase that promotes the GTP-dependent binding of aminoacyl-tRNA to the A-site of ribosomes during protein biosynthesis. The protein is Elongation factor Tu of Streptococcus agalactiae serotype V (strain ATCC BAA-611 / 2603 V/R).